A 256-amino-acid polypeptide reads, in one-letter code: tRNA (guanine-N(7)-)-methyltransferase (256 aa).

The segment at 17-45 is disordered; the sequence is TCETVPGLPQKKHYRQRAHSNPHSDHDIE. Residues 26 to 36 show a composition bias toward basic residues; that stretch reads QKKHYRQRAHS. S-adenosyl-L-methionine-binding positions include G74, 97–98, 132–133, and L152; these read EI and NA. The active site involves D155. S-adenosyl-L-methionine is bound at residue 230-232; sequence TEE.

This sequence belongs to the class I-like SAM-binding methyltransferase superfamily. TrmB family.

It is found in the nucleus. It carries out the reaction guanosine(46) in tRNA + S-adenosyl-L-methionine = N(7)-methylguanosine(46) in tRNA + S-adenosyl-L-homocysteine. It functions in the pathway tRNA modification; N(7)-methylguanine-tRNA biosynthesis. Catalyzes the formation of N(7)-methylguanine at position 46 (m7G46) in tRNA. This chain is tRNA (guanine-N(7)-)-methyltransferase, found in Caenorhabditis elegans.